The sequence spans 302 residues: Quinolinate synthase (302 aa).

The iminosuccinate site is built by His24 and Ser41. Residue Cys86 participates in [4Fe-4S] cluster binding. Residues 112-114 (YVN) and Ser129 each bind iminosuccinate. Position 173 (Cys173) interacts with [4Fe-4S] cluster. Iminosuccinate is bound by residues 199–201 (HPE) and Thr216. Residue Cys259 coordinates [4Fe-4S] cluster.

Belongs to the quinolinate synthase family. Type 2 subfamily. The cofactor is [4Fe-4S] cluster.

The protein localises to the cytoplasm. It carries out the reaction iminosuccinate + dihydroxyacetone phosphate = quinolinate + phosphate + 2 H2O + H(+). The protein operates within cofactor biosynthesis; NAD(+) biosynthesis; quinolinate from iminoaspartate: step 1/1. In terms of biological role, catalyzes the condensation of iminoaspartate with dihydroxyacetone phosphate to form quinolinate. This Thermococcus onnurineus (strain NA1) protein is Quinolinate synthase.